The chain runs to 182 residues: Isopentenyl-diphosphate Delta-isomerase (182 aa).

Mn(2+) contacts are provided by histidine 25 and histidine 32. Positions 30-164 (RLHLAFSSWL…PWAFSPWMVM (135 aa)) constitute a Nudix hydrolase domain. The active site involves cysteine 67. Histidine 69 is a binding site for Mn(2+). Position 87 (glutamate 87) interacts with Mg(2+). 2 residues coordinate Mn(2+): glutamate 114 and glutamate 116. Glutamate 116 is an active-site residue.

This sequence belongs to the IPP isomerase type 1 family. Homodimer. The cofactor is Mg(2+). Mn(2+) is required as a cofactor.

The protein resides in the cytoplasm. It catalyses the reaction isopentenyl diphosphate = dimethylallyl diphosphate. It participates in isoprenoid biosynthesis; dimethylallyl diphosphate biosynthesis; dimethylallyl diphosphate from isopentenyl diphosphate: step 1/1. In terms of biological role, catalyzes the 1,3-allylic rearrangement of the homoallylic substrate isopentenyl (IPP) to its highly electrophilic allylic isomer, dimethylallyl diphosphate (DMAPP). This is Isopentenyl-diphosphate Delta-isomerase from Escherichia coli O139:H28 (strain E24377A / ETEC).